We begin with the raw amino-acid sequence, 472 residues long: MSLVEPTEPVEVDKLGRVHFIGMGGAGMSGIARVLLQRGVEVSGSDARDSALLRELEELGATVHVGHAAEHVGDADTVVVSSAIRDTNPELVEARARNLRILPRAAALGALLLGRCGVAVAGTHGKTTTTSMITVVLQHLGAMPGYVIGGQLVTTGLGADAGADDIIVVEADESDGSFLMLSPRVAVITNVEADHLDNYGDLEEIHDKFAAFIGRVSETVVVGVDDPGARRVAEVARQRGLKVLTYGEADTADYRVRDITVDGFTTMFTIDPPTGDPVHCTLPLPGRHNTLNAAAAVAVADTIGYDPEVAVEGLAEFAGAARRFEFKGEANGVSVYDSYAHHPTEIAADLDAARAALDSQAAKGGKAGRIVVLFQPHLYSRTRIFAEEFAAALTKADEVVVLGIYAAREDPEPGVTAELITERIGHDRVYYRPDRDAAVECVVSVAQPGDIVLTMGAGDVTELGPRIVEALG.

ATP is bound at residue 122-128; sequence GTHGKTT.

Belongs to the MurCDEF family.

It localises to the cytoplasm. The enzyme catalyses UDP-N-acetyl-alpha-D-muramate + L-alanine + ATP = UDP-N-acetyl-alpha-D-muramoyl-L-alanine + ADP + phosphate + H(+). The protein operates within cell wall biogenesis; peptidoglycan biosynthesis. Cell wall formation. The polypeptide is UDP-N-acetylmuramate--L-alanine ligase (Thermobifida fusca (strain YX)).